A 472-amino-acid chain; its full sequence is MTQFEPVIGLEIHLQLNTNSKLFCSCPSGMADNPIPNSAVCPVCTAQPGTLPVLNKGAVELAVKAALALNLEINKISLFDRKNYFYPDLPKGYQITQLFKPISEHGWLEVNGRKVGITRAHMEEDAGKSIHHASYSLIDWNRAGTPLLEIVSEPEIHSADEAYEFLTKLKSNVSWVGASNADMEKGELRVDVNISLRPAGIKTFGTKVEIKNLNSFKAVRDAINVEIERQTEMLNEGKKIKQETLLFDKEKGETVSMRSKEDALDYRYFPDPDLPPLVLADEWLESVIASRPEMPARRKERFTKDYGLSDYDAGVLTSERALSEYYEDTVKTGANPKNAANWITTDLLGAINAAKLDINDCPVTAKQLGTIVTLTDSGKISRAQAKKVFEQCWQTKKDPEVIVKELGLEQVSDENQLETWAKEAIAENPKIVSDVKSGNPKAIGALIGSVMKKSKGKANPGKMNEIFAKLLQ.

This sequence belongs to the GatB/GatE family. GatB subfamily. In terms of assembly, heterotrimer of A, B and C subunits.

The catalysed reaction is L-glutamyl-tRNA(Gln) + L-glutamine + ATP + H2O = L-glutaminyl-tRNA(Gln) + L-glutamate + ADP + phosphate + H(+). The enzyme catalyses L-aspartyl-tRNA(Asn) + L-glutamine + ATP + H2O = L-asparaginyl-tRNA(Asn) + L-glutamate + ADP + phosphate + 2 H(+). In terms of biological role, allows the formation of correctly charged Asn-tRNA(Asn) or Gln-tRNA(Gln) through the transamidation of misacylated Asp-tRNA(Asn) or Glu-tRNA(Gln) in organisms which lack either or both of asparaginyl-tRNA or glutaminyl-tRNA synthetases. The reaction takes place in the presence of glutamine and ATP through an activated phospho-Asp-tRNA(Asn) or phospho-Glu-tRNA(Gln). The sequence is that of Aspartyl/glutamyl-tRNA(Asn/Gln) amidotransferase subunit B from Elusimicrobium minutum (strain Pei191).